Consider the following 237-residue polypeptide: Class B acid phosphatase (237 aa).

An N-terminal signal peptide occupies residues 1 to 23 (MKKITLALSAVCLLFTLNHSANA). Residue aspartate 69 is the Nucleophile of the active site. Mg(2+) contacts are provided by aspartate 69 and aspartate 71. Catalysis depends on aspartate 71, which acts as the Proton donor. Residues 137 to 138 (TG) and lysine 177 contribute to the substrate site. Aspartate 192 provides a ligand contact to Mg(2+).

Belongs to the class B bacterial acid phosphatase family. As to quaternary structure, homotetramer. Requires Mg(2+) as cofactor.

Its subcellular location is the periplasm. It catalyses the reaction a phosphate monoester + H2O = an alcohol + phosphate. Functionally, dephosphorylates several organic phosphate monoesters. Also has a phosphotransferase activity catalyzing the transfer of low-energy phosphate groups from organic phosphate monoesters to free hydroxyl groups of various organic compounds. The chain is Class B acid phosphatase from Salmonella arizonae (strain ATCC BAA-731 / CDC346-86 / RSK2980).